The chain runs to 427 residues: Trigger factor (427 aa).

In terms of domain architecture, PPIase FKBP-type spans 163 to 248 (GDTVVIDFVG…VHEVKSKEVP (86 aa)).

It belongs to the FKBP-type PPIase family. Tig subfamily.

It is found in the cytoplasm. The enzyme catalyses [protein]-peptidylproline (omega=180) = [protein]-peptidylproline (omega=0). Functionally, involved in protein export. Acts as a chaperone by maintaining the newly synthesized protein in an open conformation. Functions as a peptidyl-prolyl cis-trans isomerase. The protein is Trigger factor of Streptococcus uberis (strain ATCC BAA-854 / 0140J).